The sequence spans 97 residues: MSSGTPTPSNVVLIGKKPVMNYVLAALTLLNQGVSEIVIKARGRAISKAVDTVEIVRNRFLPDKIEIKEIRVGSQVVTSQDGRQSRVSTIEIAIRKK.

The residue at position 2 (Ser-2) is an N-acetylserine; by ard1 acetylase. RNA is bound by residues Lys-16, Lys-17, and Tyr-22. Lys-16 carries the post-translational modification N6,N6,N6-trimethyllysine; alternate. Lys-16 carries the N6,N6-dimethyllysine; alternate modification. Residue Lys-16 is modified to N6-acetyllysine; alternate. Lys-16 carries the N6-methyllysine; alternate modification. Deamidated asparagine; partial is present on Asn-31. Gln-32 carries the post-translational modification Deamidated glutamine; partial. N6-methyllysine; partial is present on Lys-40. Residues Arg-42 and Arg-44 each coordinate RNA. Lys-48 is subject to N6-acetyllysine; partial. Asp-51 is modified (aspartate methyl ester; partial). Asn-58 bears the Deamidated asparagine; partial mark. Lys-64 carries the post-translational modification N6-acetyllysine; alternate; partial. Lys-64 is subject to N6-methyllysine; alternate; partial. The residue at position 68 (Lys-68) is an N6-acetyllysine; partial. At Gln-75 the chain carries N5-methylglutamine; partial. The residue at position 81 (Asp-81) is an Aspartate methyl ester; partial. N6-methyllysine; partial is present on Lys-97.

The protein belongs to the histone-like Alba family. In terms of assembly, forms homodimers and higher order oligomers, e.g. homotetramers. Acetylated. Acetylation at Lys-16 by the Pat acetylase decreases DNA-binding affinity. Deacetylation at Lys-16 by the CobB deacetylase increases DNA-binding affinity. Acetylation at Ser-2 is involved in the regulation of the turnover of the protein.

It localises to the cytoplasm. Its subcellular location is the chromosome. Functionally, binds double-stranded DNA tightly but without sequence specificity. Involved in DNA compaction. Possesses DNA endonuclease activity. Prevents transcription after DNA binding. Binds single-stranded DNA and RNA in vitro. Binds rRNA and mRNA in vivo. May play a role in maintaining the structural and functional stability of RNA, and, perhaps, ribosomes. Binds double-stranded RNA (dsRNA) and exhibits RNA chaperone activity. Required for normal growth. The polypeptide is DNA/RNA-binding protein Alba 1 (Saccharolobus islandicus (strain REY15A) (Sulfolobus islandicus)).